We begin with the raw amino-acid sequence, 234 residues long: Small ribosomal subunit protein uS3 (234 aa).

Residues 17-86 (VEKFLTKELK…SPQVEVQQVQ (70 aa)) form the KH type-2 domain.

Belongs to the universal ribosomal protein uS3 family. In terms of assembly, part of the 30S ribosomal subunit.

Binds the lower part of the 30S subunit head. The protein is Small ribosomal subunit protein uS3 of Methanoculleus marisnigri (strain ATCC 35101 / DSM 1498 / JR1).